The primary structure comprises 192 residues: Fe/S biogenesis protein NfuA (192 aa).

Residues C149 and C152 each coordinate [4Fe-4S] cluster.

Belongs to the NfuA family. Homodimer. [4Fe-4S] cluster serves as cofactor.

In terms of biological role, involved in iron-sulfur cluster biogenesis. Binds a 4Fe-4S cluster, can transfer this cluster to apoproteins, and thereby intervenes in the maturation of Fe/S proteins. Could also act as a scaffold/chaperone for damaged Fe/S proteins. This Shewanella loihica (strain ATCC BAA-1088 / PV-4) protein is Fe/S biogenesis protein NfuA.